A 601-amino-acid polypeptide reads, in one-letter code: Zinc finger CCCH domain-containing protein 33 (601 aa).

ANK repeat units follow at residues 71-101 and 106-138; these read ERRT…EAAR and DGAT…SVDA. Residues 167–180 are compositionally biased toward low complexity; the sequence is PAVSPSSSPKKSAS. The segment at 167–203 is disordered; that stretch reads PAVSPSSSPKKSASPPSPPPPQEAKKEYPPDLTLPDL. 2 consecutive C3H1-type zinc fingers follow at residues 252–280 and 288–312; these read SYSC…HGVF and QYRT…HKPD.

The chain is Zinc finger CCCH domain-containing protein 33 from Oryza sativa subsp. japonica (Rice).